The following is a 527-amino-acid chain: EGF domain-specific O-linked N-acetylglucosamine transferase (527 aa).

A signal peptide spans 1 to 17 (MLMLFVFGVLLHEVSLS). The Required for optimal activity motif lies at 295-297 (DYD). An N-linked (GlcNAc...) asparagine glycan is attached at asparagine 354. The Prevents secretion from ER signature appears at 524–527 (HDEL).

The protein belongs to the glycosyltransferase 61 family.

The protein localises to the endoplasmic reticulum lumen. It carries out the reaction L-seryl-[protein] + UDP-N-acetyl-alpha-D-glucosamine = 3-O-(N-acetyl-beta-D-glucosaminyl)-L-seryl-[protein] + UDP + H(+). The catalysed reaction is L-threonyl-[protein] + UDP-N-acetyl-alpha-D-glucosamine = 3-O-(N-acetyl-beta-D-glucosaminyl)-L-threonyl-[protein] + UDP + H(+). Catalyzes the transfer of a single N-acetylglucosamine from UDP-GlcNAc to a serine or threonine residue in extracellular proteins resulting in their modification with a beta-linked N-acetylglucosamine (O-GlcNAc). Specifically glycosylates the Thr residue located between the fifth and sixth conserved cysteines of folded EGF-like domains. The chain is EGF domain-specific O-linked N-acetylglucosamine transferase (EOGT) from Pan troglodytes (Chimpanzee).